A 685-amino-acid chain; its full sequence is Beta-taxilin (685 aa).

Residues 1 to 135 (MEINHPDQLS…KEPVSNKEQK (135 aa)) form a disordered region. Over residues 18–28 (GDSSSLNQNGP) the composition is skewed to polar residues. Composition is skewed to basic and acidic residues over residues 47–67 (GSLH…RQLE) and 80–90 (RGKESTSETKE). Acidic residues predominate over residues 98–113 (PDNEDVDYEETTEEID). 2 coiled-coil regions span residues 138 to 354 (KKIL…VLKE) and 381 to 470 (NEVF…SEKE). Residues 465–478 (KMSEKEDQVQRTSE) show a composition bias toward basic and acidic residues. Disordered regions lie at residues 465–497 (KMSE…EEAN) and 517–685 (EFTP…NGVD). A phosphoserine mark is found at Ser477, Ser484, and Ser486. Acidic residues predominate over residues 479 to 495 (EEPEPSVSENEEVDAEE). Residues 575 to 591 (CEATPAPTASCTPAEAE) are compositionally biased toward low complexity. Over residues 612-627 (ANTSGQAPLSPAQGSL) the composition is skewed to polar residues.

Belongs to the taxilin family. Binds to the C-terminal coiled coil region of syntaxin family members STX1A, STX3A and STX4A. Has a preference for STX1A. Specifically expressed in skeletal muscle.

Functionally, promotes motor nerve regeneration. May be involved in intracellular vesicle traffic. The sequence is that of Beta-taxilin (Txlnb) from Mus musculus (Mouse).